A 296-amino-acid polypeptide reads, in one-letter code: Light-independent protochlorophyllide reductase iron-sulfur ATP-binding protein (296 aa).

A compositionally biased stretch (basic and acidic residues) spans 1-11 (MTSTITRKEDG). The tract at residues 1-20 (MTSTITRKEDGEGSVQVKQD) is disordered. ATP is bound by residues 39–44 (GIGKST) and Lys68. Position 43 (Ser43) interacts with Mg(2+). The [4Fe-4S] cluster site is built by Cys124 and Cys158. Residue 209–210 (NR) coordinates ATP.

This sequence belongs to the NifH/BchL/ChlL family. In terms of assembly, homodimer. Protochlorophyllide reductase is composed of three subunits; ChlL, ChlN and ChlB. [4Fe-4S] cluster serves as cofactor.

It carries out the reaction chlorophyllide a + oxidized 2[4Fe-4S]-[ferredoxin] + 2 ADP + 2 phosphate = protochlorophyllide a + reduced 2[4Fe-4S]-[ferredoxin] + 2 ATP + 2 H2O. It functions in the pathway porphyrin-containing compound metabolism; chlorophyll biosynthesis (light-independent). Functionally, component of the dark-operative protochlorophyllide reductase (DPOR) that uses Mg-ATP and reduced ferredoxin to reduce ring D of protochlorophyllide (Pchlide) to form chlorophyllide a (Chlide). This reaction is light-independent. The L component serves as a unique electron donor to the NB-component of the complex, and binds Mg-ATP. This is Light-independent protochlorophyllide reductase iron-sulfur ATP-binding protein from Prochlorococcus marinus (strain NATL1A).